The following is a 159-amino-acid chain: Cytochrome c nitrite reductase subunit NrfH (159 aa).

The Cytoplasmic segment spans residues 2–14 (SEEKSRNGPARLK). A helical; Signal-anchor for type II membrane protein membrane pass occupies residues 15–33 (LVLGGATLGVVALATVAFG). At 34–159 (MKYTDQRPFC…PISTREVADE (126 aa)) the chain is on the periplasmic side. The heme site is built by Cys43, Cys46, Met49, His61, and Cys66. Position 67 (Asn67) interacts with a menaquinol. The heme site is built by Cys69 and His70. Residues Lys82 and Asp89 each contribute to the a menaquinol site. Asp89 is a binding site for heme. The segment at 99–100 (GD) is interaction with NrfA. Positions 116, 119, 120, 136, 139, 140, and 145 each coordinate heme. An interaction with NrfA region spans residues 123-158 (TNVEVASMEAKKYCTDCHRNVQHMRMKPISTREVAD).

Belongs to the NapC/NirT/NrfH family. In terms of assembly, component of the NrfHA cytochrome c nitrite reductase complex composed of 4 NrfA catalytic subunits and 2 NrfH quinone-binding subunits. Interacts with NrfA homodimer. Requires heme as cofactor.

It localises to the cell inner membrane. Its function is as follows. Electron donor subunit of the cytochrome c nitrite reductase holocomplex NrfHA. Acquires electrons from the menaquinone pool and mediates their transfer to the catalytic subunit NrfA in an anaerobic respiratory process of nitrite. The other biological function of the NrfHA holocomplex is to detoxify nitrite. This function is essential for the survival of this organism as it enables it to overcome inhibition by nitrite, which is produced by other organisms living in the same environment. This Nitratidesulfovibrio vulgaris (strain ATCC 29579 / DSM 644 / CCUG 34227 / NCIMB 8303 / VKM B-1760 / Hildenborough) (Desulfovibrio vulgaris) protein is Cytochrome c nitrite reductase subunit NrfH.